Here is a 67-residue protein sequence, read N- to C-terminus: Cell division protein ZapB (67 aa).

Residues 3 to 59 (LELLSQLETKIQTALETIELLKLELDEEKEKAANLAEQNHQLKQELSSWNDKITGLV) are a coiled coil.

It belongs to the ZapB family. Homodimer. The ends of the coiled-coil dimer bind to each other, forming polymers. Interacts with FtsZ.

Its subcellular location is the cytoplasm. Functionally, non-essential, abundant cell division factor that is required for proper Z-ring formation. It is recruited early to the divisome by direct interaction with FtsZ, stimulating Z-ring assembly and thereby promoting cell division earlier in the cell cycle. Its recruitment to the Z-ring requires functional FtsA or ZipA. In Shewanella amazonensis (strain ATCC BAA-1098 / SB2B), this protein is Cell division protein ZapB.